Reading from the N-terminus, the 471-residue chain is Tyrosine--tRNA ligase, mitochondrial (471 aa).

L-tyrosine is bound at residue tyrosine 71. Aspartate 75 lines the ATP pocket. The short motif at 76–85 (PTGDSLHVGH) is the 'HIGH' region element. Residues aspartate 115, tyrosine 215, glutamine 219, aspartate 222, and glutamine 241 each contribute to the L-tyrosine site. ATP is bound by residues isoleucine 268 and lysine 278. The 'KMSKS' region signature appears at 275-279 (KLGKS). Lysine 349 and lysine 361 each carry N6-acetyllysine.

This sequence belongs to the class-I aminoacyl-tRNA synthetase family. In terms of assembly, homodimer.

It localises to the mitochondrion matrix. The enzyme catalyses tRNA(Tyr) + L-tyrosine + ATP = L-tyrosyl-tRNA(Tyr) + AMP + diphosphate + H(+). Its function is as follows. Catalyzes the attachment of tyrosine to tRNA(Tyr) in a two-step reaction: tyrosine is first activated by ATP to form Tyr-AMP and then transferred to the acceptor end of tRNA(Tyr). The protein is Tyrosine--tRNA ligase, mitochondrial (Yars2) of Rattus norvegicus (Rat).